The sequence spans 31 residues: Cytochrome b6-f complex subunit 6 (31 aa).

The chain crosses the membrane as a helical span at residues 4 to 24; the sequence is IISYFGFLFGALTLALILFIG.

Belongs to the PetL family. The 4 large subunits of the cytochrome b6-f complex are cytochrome b6, subunit IV (17 kDa polypeptide, PetD), cytochrome f and the Rieske protein, while the 4 small subunits are PetG, PetL, PetM and PetN. The complex functions as a dimer.

The protein resides in the plastid. It is found in the chloroplast thylakoid membrane. Functionally, component of the cytochrome b6-f complex, which mediates electron transfer between photosystem II (PSII) and photosystem I (PSI), cyclic electron flow around PSI, and state transitions. PetL is important for photoautotrophic growth as well as for electron transfer efficiency and stability of the cytochrome b6-f complex. The protein is Cytochrome b6-f complex subunit 6 of Physcomitrium patens (Spreading-leaved earth moss).